A 164-amino-acid polypeptide reads, in one-letter code: Pheromone-binding protein (164 aa).

The N-terminal stretch at 1–22 (MSIQGQIALALMVNMAVGSVDA) is a signal peptide. Disulfide bonds link cysteine 41-cysteine 76, cysteine 72-cysteine 130, and cysteine 119-cysteine 139.

Belongs to the PBP/GOBP family. In terms of assembly, homodimer. Antenna.

In terms of biological role, this major soluble protein in olfactory sensilla of male moths serves to solubilize the extremely hydrophobic pheromone molecules such as bombykol and to transport pheromone through the aqueous lymph to receptors located on olfactory cilia. The chain is Pheromone-binding protein from Bombyx mori (Silk moth).